The chain runs to 328 residues: Small neutral protease regulatory protein (328 aa).

The HTH lysR-type domain maps to 1 to 60; that stretch reads MELEVRHLRALCAIADAGSLHRAARRLGVAQPTLSTQLTRIEQALGGPLFTRERTGCRPT. A DNA-binding region (H-T-H motif) is located at residues 20–39; sequence LHRAARRLGVAQPTLSTQLT.

It belongs to the LysR transcriptional regulatory family.

Its function is as follows. Transcriptional trans-activator of the gene (mprA) for the small neutral protease. In Streptomyces coelicolor (strain ATCC BAA-471 / A3(2) / M145), this protein is Small neutral protease regulatory protein (mprR).